A 349-amino-acid chain; its full sequence is Probable FBD-associated F-box protein At5g38565 (349 aa).

Residues Met-1–Gly-47 enclose the F-box domain. The FBD domain maps to Cys-263–Ile-311.

The polypeptide is Probable FBD-associated F-box protein At5g38565 (Arabidopsis thaliana (Mouse-ear cress)).